The primary structure comprises 164 residues: Phosphopantetheine adenylyltransferase (164 aa).

Position 9 (serine 9) interacts with substrate. Residues 9–10 and histidine 17 each bind ATP; that span reads SF. 3 residues coordinate substrate: lysine 41, leucine 73, and arginine 87. ATP-binding positions include glutamate 98 and 122–128; that span reads YSFLSSS.

The protein belongs to the bacterial CoaD family. Homohexamer. The cofactor is Mg(2+).

It is found in the cytoplasm. The catalysed reaction is (R)-4'-phosphopantetheine + ATP + H(+) = 3'-dephospho-CoA + diphosphate. The protein operates within cofactor biosynthesis; coenzyme A biosynthesis; CoA from (R)-pantothenate: step 4/5. Functionally, reversibly transfers an adenylyl group from ATP to 4'-phosphopantetheine, yielding dephospho-CoA (dPCoA) and pyrophosphate. This Thermobifida fusca (strain YX) protein is Phosphopantetheine adenylyltransferase.